A 295-amino-acid chain; its full sequence is Secreted frizzled-related protein 2 (295 aa).

An N-terminal signal peptide occupies residues 1–24 (MLQGPGSLLLLFLASHCCLGSARG). In terms of domain architecture, FZ spans 35–155 (YKRSNCKPIP…PQDNDLCIPL (121 aa)). 8 disulfide bridges follow: C40-C103, C50-C96, C87-C125, C114-C152, C118-C142, C172-C245, C175-C247, and C190-C295. The NTR domain maps to 172 to 295 (CEACKNKNDD…ISRSIRKLQC (124 aa)).

Belongs to the secreted frizzled-related protein (sFRP) family. Expressed in adipose tissue, heart, brain, skeletal muscle, pancreas, thymus, prostate, testis, ovary, small intestine and colon. Highest levels in adipose tissue, small intestine and colon.

It localises to the secreted. Its function is as follows. Soluble frizzled-related proteins (sFRPS) function as modulators of Wnt signaling through direct interaction with Wnts. They have a role in regulating cell growth and differentiation in specific cell types. SFRP2 may be important for eye retinal development and for myogenesis. The polypeptide is Secreted frizzled-related protein 2 (SFRP2) (Homo sapiens (Human)).